The following is a 413-amino-acid chain: Transmembrane protein 184A (413 aa).

Transmembrane regions (helical) follow at residues 47-69, 93-113, 130-150, 187-207, 223-243, 258-278, and 300-320; these read WLFL…ALVL, LLLI…LLGD, FVIY…GAIM, LQFC…QAFG, VTLI…LFYF, FLTI…LAIL, and LAAG…SVAL. The disordered stretch occupies residues 372–413; it reads QHYTQQATHEAPRPGTHPSGGSGGSRKSRSLEKRMLIPSEDL.

This sequence belongs to the TMEM184 family. Expressed in vascular cells (at protein level).

The protein localises to the cell membrane. It localises to the cytoplasm. The protein resides in the perinuclear region. Its subcellular location is the cytoplasmic vesicle membrane. It is found in the early endosome membrane. The protein localises to the endosome. It localises to the cytoplasmic vesicle. The protein resides in the secretory vesicle membrane. Its function is as follows. Acts as a heparin receptor in vascular cells. May be involved in vesicle transport in exocrine cells and Sertoli cells. The chain is Transmembrane protein 184A (TMEM184A) from Homo sapiens (Human).